The sequence spans 391 residues: Elongation factor Tu (391 aa).

The 192-residue stretch at 10–201 (KPHVNIGTIG…AVDSYIPTPE (192 aa)) folds into the tr-type G domain. Residues 19 to 26 (GHVDHGKT) form a G1 region. 19–26 (GHVDHGKT) is a GTP binding site. Threonine 26 provides a ligand contact to Mg(2+). Residues 55–59 (GITIS) form a G2 region. Residues 76–79 (DCPG) form a G3 region. Residues 76–80 (DCPGH) and 131–134 (NKCD) each bind GTP. A G4 region spans residues 131 to 134 (NKCD). A G5 region spans residues 169–171 (SAL).

It belongs to the TRAFAC class translation factor GTPase superfamily. Classic translation factor GTPase family. EF-Tu/EF-1A subfamily. As to quaternary structure, monomer.

The protein resides in the cytoplasm. It carries out the reaction GTP + H2O = GDP + phosphate + H(+). Its function is as follows. GTP hydrolase that promotes the GTP-dependent binding of aminoacyl-tRNA to the A-site of ribosomes during protein biosynthesis. This Brucella canis (strain ATCC 23365 / NCTC 10854 / RM-666) protein is Elongation factor Tu.